We begin with the raw amino-acid sequence, 145 residues long: Histone H2B.1, sperm (145 aa).

The disordered stretch occupies residues methionine 1–arginine 52. 4 consecutive short sequence motifs (SPKK motif) follow at residues serine 6 to lysine 9, serine 11 to lysine 14, serine 16 to lysine 19, and serine 21 to lysine 24. 2 stretches are compositionally biased toward basic residues: residues proline 7 to proline 22 and lysine 30 to arginine 52. A phosphoserine mark is found at serine 16 and serine 21. O-linked (GlcNAc) serine glycosylation occurs at serine 132. Lysine 140 participates in a covalent cross-link: Glycyl lysine isopeptide (Lys-Gly) (interchain with G-Cter in ubiquitin).

This sequence belongs to the histone H2B family. As to quaternary structure, the nucleosome is a histone octamer containing two molecules each of H2A, H2B, H3 and H4 assembled in one H3-H4 heterotetramer and two H2A-H2B heterodimers. The octamer wraps approximately 147 bp of DNA. In terms of processing, monoubiquitination of Lys-140 gives a specific tag for epigenetic transcriptional activation and is also prerequisite for histone H3 'Lys-4' and 'Lys-79' methylation. Phosphorylated on SPKK motifs 3 and 4; which may regulate DNA binding. Dephosphorylated during maturation of spermatids to mature sperm and rephosphorylated at fertilization. Post-translationally, glcNAcylation at Ser-132 promotes monoubiquitination of Lys-140. It fluctuates in response to extracellular glucose, and associates with transcribed genes.

It localises to the nucleus. Its subcellular location is the chromosome. In terms of biological role, core component of nucleosome. Nucleosomes wrap and compact DNA into chromatin, limiting DNA accessibility to the cellular machineries which require DNA as a template. Histones thereby play a central role in transcription regulation, DNA repair, DNA replication and chromosomal stability. DNA accessibility is regulated via a complex set of post-translational modifications of histones, also called histone code, and nucleosome remodeling. This chain is Histone H2B.1, sperm, found in Parechinus angulosus (Angulate sea urchin).